The following is a 1187-amino-acid chain: Phospholipid-transporting ATPase IH (1187 aa).

The Cytoplasmic portion of the chain corresponds to 1 to 61; sequence MDCSLLRTLV…SSKYTFWNFI (61 aa). Residues 62 to 82 form a helical membrane-spanning segment; sequence PKNLFEQFRRIANFYFLIIFL. The Extracellular portion of the chain corresponds to 83-88; that stretch reads VQLIID. Residues 89-110 traverse the membrane as a helical segment; that stretch reads TPTSPVTSGLPLFFVITVTAIK. At 111–296 the chain is on the cytoplasmic side; sequence QGYEDWLRHK…SAVEKSMNTF (186 aa). Residues 297 to 318 form a helical membrane-spanning segment; sequence LIVYLCILVSKALINTVLKYVW. At 319–349 the chain is on the extracellular side; sequence QSEPFRDEPWYNEKTESERQRNLFLRAFTDF. The chain crosses the membrane as a helical span at residues 350-372; the sequence is LAFMVLFNYIIPVSMYVTVEMQK. Topologically, residues 373-884 are cytoplasmic; that stretch reads FLGSYFITWD…GHFYYIRISE (512 aa). Asp-414 functions as the 4-aspartylphosphate intermediate in the catalytic mechanism. Asp-414, Lys-415, Thr-416, Glu-513, Phe-555, Lys-578, Arg-609, Thr-689, Gly-690, and Asp-691 together coordinate ATP. Asp-414 contacts Mg(2+). Thr-416 contributes to the Mg(2+) binding site. Residue Ser-740 is modified to Phosphoserine. Residues Arg-801 and Lys-807 each contribute to the ATP site. Mg(2+) is bound at residue Asp-828. Asn-831 and Asp-832 together coordinate ATP. Asp-832 serves as a coordination point for Mg(2+). Residues 885–905 traverse the membrane as a helical segment; that stretch reads LVQYFFYKNVCFIFPQFLYQF. Over 906–917 the chain is Extracellular; sequence FCGFSQQTLYDT. The helical transmembrane segment at 918 to 937 threads the bilayer; that stretch reads AYLTLYNISFTSLPILLYSL. The Cytoplasmic portion of the chain corresponds to 938-967; the sequence is MEQHVGIDVLKRDPTLYRDIAKNALLRWRV. The helical transmembrane segment at 968–989 threads the bilayer; it reads FIYWTFLGVFDALVFFFGAYFI. Residues 990-1003 are Extracellular-facing; that stretch reads FENTTVTINGQMFG. A helical membrane pass occupies residues 1004–1026; the sequence is NWTFGTLVFTVMVLTVTLKLALD. The Cytoplasmic portion of the chain corresponds to 1027–1032; the sequence is THYWTW. The helical transmembrane segment at 1033–1053 threads the bilayer; that stretch reads INHFVIWGSLLFYIAFSLLWG. Residues 1054–1071 lie on the Extracellular side of the membrane; sequence GVIWPFLSYQRMYYVFIS. A helical membrane pass occupies residues 1072–1096; sequence MLSSGPAWLGIILLVTVGLLPDVLK. The Cytoplasmic segment spans residues 1097 to 1138; it reads KVLCRQLWPTATERTQNIQHQDSISEFTPLASLPSWGAQGSR. Phosphoserine occurs at positions 1148 and 1158.

The protein belongs to the cation transport ATPase (P-type) (TC 3.A.3) family. Type IV subfamily. In terms of assembly, component of a P4-ATPase flippase complex which consists of a catalytic alpha subunit ATP11A and an accessory beta subunit TMEM30A. Requires Mg(2+) as cofactor. Proteolytically cleaved by CASP3. Widely expressed. Expressed in myoblasts. Expressed in retina, brain, liver, testes and kidney (at protein level). Expressed in the inner ear.

The protein localises to the cell membrane. Its subcellular location is the early endosome. It localises to the recycling endosome. It is found in the endoplasmic reticulum membrane. The enzyme catalyses ATP + H2O + phospholipidSide 1 = ADP + phosphate + phospholipidSide 2.. It catalyses the reaction a 1,2-diacyl-sn-glycero-3-phospho-L-serine(out) + ATP + H2O = a 1,2-diacyl-sn-glycero-3-phospho-L-serine(in) + ADP + phosphate + H(+). It carries out the reaction a 1,2-diacyl-sn-glycero-3-phosphoethanolamine(out) + ATP + H2O = a 1,2-diacyl-sn-glycero-3-phosphoethanolamine(in) + ADP + phosphate + H(+). Its function is as follows. Catalytic component of a P4-ATPase flippase complex which catalyzes the hydrolysis of ATP coupled to the transport of aminophospholipids, phosphatidylserines (PS) and phosphatidylethanolamines (PE), from the outer to the inner leaflet of the plasma membrane. Does not show flippase activity toward phosphatidylcholine (PC). Contributes to the maintenance of membrane lipid asymmetry with a specific role in morphogenesis of muscle cells. In myoblasts, mediates PS enrichment at the inner leaflet of plasma membrane, triggering PIEZO1-dependent Ca2+ influx and Rho GTPases signal transduction, subsequently leading to the assembly of cortical actomyosin fibers and myotube formation. This is Phospholipid-transporting ATPase IH (Atp11a) from Mus musculus (Mouse).